We begin with the raw amino-acid sequence, 109 residues long: Large ribosomal subunit protein uL22 (109 aa).

This sequence belongs to the universal ribosomal protein uL22 family. Part of the 50S ribosomal subunit.

Functionally, this protein binds specifically to 23S rRNA; its binding is stimulated by other ribosomal proteins, e.g. L4, L17, and L20. It is important during the early stages of 50S assembly. It makes multiple contacts with different domains of the 23S rRNA in the assembled 50S subunit and ribosome. In terms of biological role, the globular domain of the protein is located near the polypeptide exit tunnel on the outside of the subunit, while an extended beta-hairpin is found that lines the wall of the exit tunnel in the center of the 70S ribosome. The polypeptide is Large ribosomal subunit protein uL22 (Bordetella petrii (strain ATCC BAA-461 / DSM 12804 / CCUG 43448)).